Here is a 591-residue protein sequence, read N- to C-terminus: MMRSHYCGQLNESLEGQEITLCGWVHRRRDHGGVIFLDIRDREGMAQVVFDPDRADSFAAADRVRSEYVVKVVGKVRARPAGAVNANMASGAIEVLGYELEVLNESETPPFPLNEYSDVGEETRLRYRFIDLRRPEMAEKLRLRSRITTSIRRYLDENGFLDVETPILTRATPEGARDYLVPSRTHPGSFFALPQSPQLFKQLLMVAGFDRYYQIAKCFRDEDLRADRQPEFTQIDIETSFLNEEDIIGLTEKMVRQLFKEVLNVEFGDFPHMTFEEAMRRYGSDKPDLRNPLELVDVADQLNAVEFKVFSGPANDPKGRVAALRVPGAASMARSQIDDYTKFVSIYGAKGLAYIKVNERAKGPEGLQSPIVKFIPEENLNVILDRVGAVDGDIVFFGADKFKVVSEALGALRIKIGNDLKLHTCEWAPMWVVDFPMFEENDDGSFSALHHPFTAPKCTPEELEANPATALSRAYDMVLNGTELGGGSIRIHRKEMQQAVFRLLGIAEDEQQEKFGFLLDALKYGAPPHGGLAFGLDRLVMLMTGAQSIREVIAFPKTQSAADVMTQAPGVVDAKALRELHIRLREQPKAE.

Glu-174 provides a ligand contact to L-aspartate. The segment at 198-201 (QLFK) is aspartate. Arg-220 serves as a coordination point for L-aspartate. ATP is bound by residues 220 to 222 (RDE) and Gln-229. His-450 contributes to the L-aspartate binding site. Glu-483 contributes to the ATP binding site. Arg-490 is an L-aspartate binding site. 535–538 (GLDR) lines the ATP pocket.

This sequence belongs to the class-II aminoacyl-tRNA synthetase family. Type 1 subfamily. Homodimer.

Its subcellular location is the cytoplasm. It carries out the reaction tRNA(Asx) + L-aspartate + ATP = L-aspartyl-tRNA(Asx) + AMP + diphosphate. Its function is as follows. Aspartyl-tRNA synthetase with relaxed tRNA specificity since it is able to aspartylate not only its cognate tRNA(Asp) but also tRNA(Asn). Reaction proceeds in two steps: L-aspartate is first activated by ATP to form Asp-AMP and then transferred to the acceptor end of tRNA(Asp/Asn). This Pseudomonas syringae pv. tomato (strain ATCC BAA-871 / DC3000) protein is Aspartate--tRNA(Asp/Asn) ligase.